The sequence spans 82 residues: UPF0512 protein P (82 aa).

This sequence belongs to the UPF0512 family.

The protein is UPF0512 protein P of Dictyostelium discoideum (Social amoeba).